The chain runs to 39 residues: Photosystem II reaction center protein Y (39 aa).

A helical transmembrane segment spans residues 4–22 (TLVVFAPIIAALAWVIFNI).

Belongs to the PsbY family. In terms of assembly, PSII is composed of 1 copy each of membrane proteins PsbA, PsbB, PsbC, PsbD, PsbE, PsbF, PsbH, PsbI, PsbJ, PsbK, PsbL, PsbM, PsbT, PsbX, PsbY, Psb30/Ycf12, peripheral proteins PsbO, CyanoQ (PsbQ), PsbU, PsbV and a large number of cofactors. It forms dimeric complexes.

Its subcellular location is the cellular thylakoid membrane. In terms of biological role, loosely associated component of the core of photosystem II (PSII), it is not always seen in crystals. PSII is a light-driven water plastoquinone oxidoreductase, using light energy to abstract electrons from H(2)O, generating a proton gradient subsequently used for ATP formation. The polypeptide is Photosystem II reaction center protein Y (Prochlorococcus marinus (strain MIT 9515)).